Consider the following 118-residue polypeptide: Cell division protein SepF (118 aa).

Residues 1–12 (MGIMSKILGGGG) are important for localization in a ring-like structure at midcell.

In terms of assembly, homodimer. Does not oligomerize. Interacts with FtsZ2.

The protein localises to the cytoplasm. Involved in cell division. Probably acts as a membrane anchor for FstZ2, tethering its filaments to the division site. May be involved in septum closure. This chain is Cell division protein SepF, found in Haloferax volcanii (strain ATCC 29605 / DSM 3757 / JCM 8879 / NBRC 14742 / NCIMB 2012 / VKM B-1768 / DS2) (Halobacterium volcanii).